We begin with the raw amino-acid sequence, 141 residues long: Lysozyme 1 (141 aa).

The N-terminal stretch at 1–19 (MKFFIVLVAALALAAPAMG) is a signal peptide. Residues 20–141 (KTFTRCSLAR…GSLPSINDCF (122 aa)) enclose the C-type lysozyme domain. Intrachain disulfides connect C25–C140, C46–C130, C81–C97, and C93–C111. The active site involves E51. The N-linked (GlcNAc...) asparagine glycan is linked to N65. Residue D69 is part of the active site. Residue N104 is glycosylated (N-linked (GlcNAc...) asparagine).

The protein belongs to the glycosyl hydrolase 22 family.

It catalyses the reaction Hydrolysis of (1-&gt;4)-beta-linkages between N-acetylmuramic acid and N-acetyl-D-glucosamine residues in a peptidoglycan and between N-acetyl-D-glucosamine residues in chitodextrins.. Its function is as follows. May not function as a self-defense protein, but as a digestive enzyme, probably in the gut of the insect body. Inactive towards Micrococcus luteus. Active toward glycol chitin. The protein is Lysozyme 1 of Musca domestica (House fly).